A 271-amino-acid chain; its full sequence is ATP synthase subunit a (271 aa).

The next 5 membrane-spanning stretches (helical) occupy residues 38–58 (FWTL…LFLL), 100–120 (LIAP…LMDL), 146–166 (DVNI…FYSI), 220–240 (LIFI…LNVP), and 242–262 (AIFH…LTIV).

It belongs to the ATPase A chain family. In terms of assembly, F-type ATPases have 2 components, CF(1) - the catalytic core - and CF(0) - the membrane proton channel. CF(1) has five subunits: alpha(3), beta(3), gamma(1), delta(1), epsilon(1). CF(0) has three main subunits: a(1), b(2) and c(9-12). The alpha and beta chains form an alternating ring which encloses part of the gamma chain. CF(1) is attached to CF(0) by a central stalk formed by the gamma and epsilon chains, while a peripheral stalk is formed by the delta and b chains.

The protein resides in the cell inner membrane. Key component of the proton channel; it plays a direct role in the translocation of protons across the membrane. This chain is ATP synthase subunit a, found in Citrobacter koseri (strain ATCC BAA-895 / CDC 4225-83 / SGSC4696).